We begin with the raw amino-acid sequence, 249 residues long: MPPRKIKKDPAVVAMADTLETRVKDLLEEYKKKLREVALQTAKAESDRIIATIKPKYRDMPIMEFLASPPDDFYIESGEEEEEGEAAVAVKQELPSEPDMEIDDAAAAQKTSIPIGQNSGRNTVQVKQEPEIDDDAAHETSIPIAPSGQNSGRNTAADEHRRNEIITPAGQVLPLPTLQPEKPFRAPHVDEEIAFSVNGSPLVLAGRTTATAAGKENRKKSKKSGAASKKAAAAAGPLQPETENAGTSV.

Positions 12–48 form a coiled coil; it reads VVAMADTLETRVKDLLEEYKKKLREVALQTAKAESDR. Disordered regions lie at residues 70-89, 94-183, and 208-249; these read PDDF…AAVA, LPSE…PEKP, and TTAT…GTSV. The span at 73 to 85 shows a compositional bias: acidic residues; sequence FYIESGEEEEEGE. Polar residues predominate over residues 109–126; it reads QKTSIPIGQNSGRNTVQV. Positions 224-236 are enriched in low complexity; sequence SGAASKKAAAAAG.

Belongs to the borealin family. Highly divergent. Component of the CPC complex which consists of icp-1; csc-1; bir-1 and air-2. Within the complex interacts with Aurora B/air-2, bir-1 and icp-1.

Its subcellular location is the nucleus. The protein localises to the chromosome. It localises to the centromere. The protein resides in the cytoplasm. It is found in the cytoskeleton. Its subcellular location is the spindle. In terms of biological role, component of the chromosomal passenger complex (CPC), a complex that acts as a key regulator of chromosome segregation and cytokinesis during mitosis. The CPC complex has essential functions at the centromere in ensuring correct chromosome alignment and segregation. In the complex, it may be required to direct the Aurora B/air-2 to centromeric DNA. The sequence is that of Chromosome segregation and cytokinesis defective protein 1 (csc-1) from Caenorhabditis elegans.